The chain runs to 144 residues: Large ribosomal subunit protein uL13 (144 aa).

The protein belongs to the universal ribosomal protein uL13 family. Part of the 50S ribosomal subunit.

Functionally, this protein is one of the early assembly proteins of the 50S ribosomal subunit, although it is not seen to bind rRNA by itself. It is important during the early stages of 50S assembly. The polypeptide is Large ribosomal subunit protein uL13 (Clostridium kluyveri (strain NBRC 12016)).